The primary structure comprises 428 residues: Serine--tRNA ligase (428 aa).

An L-serine-binding site is contributed by 233–235; the sequence is TAE. 264–266 serves as a coordination point for ATP; sequence RRE. E287 is a binding site for L-serine. 351 to 354 lines the ATP pocket; that stretch reads EVSS. L-serine is bound at residue S387.

This sequence belongs to the class-II aminoacyl-tRNA synthetase family. Type-1 seryl-tRNA synthetase subfamily. As to quaternary structure, homodimer. The tRNA molecule binds across the dimer.

Its subcellular location is the cytoplasm. The catalysed reaction is tRNA(Ser) + L-serine + ATP = L-seryl-tRNA(Ser) + AMP + diphosphate + H(+). The enzyme catalyses tRNA(Sec) + L-serine + ATP = L-seryl-tRNA(Sec) + AMP + diphosphate + H(+). It participates in aminoacyl-tRNA biosynthesis; selenocysteinyl-tRNA(Sec) biosynthesis; L-seryl-tRNA(Sec) from L-serine and tRNA(Sec): step 1/1. In terms of biological role, catalyzes the attachment of serine to tRNA(Ser). Is also able to aminoacylate tRNA(Sec) with serine, to form the misacylated tRNA L-seryl-tRNA(Sec), which will be further converted into selenocysteinyl-tRNA(Sec). This is Serine--tRNA ligase from Salinibacter ruber (strain DSM 13855 / M31).